We begin with the raw amino-acid sequence, 2197 residues long: uncharacterized protein (2197 aa).

An N-acetylserine modification is found at Ser2. The stretch at 2159 to 2195 (TIPFLAELLEDVELSVKSLAQDIIKQMEEMSGESLAE) is one HEAT repeat.

This sequence belongs to the HEATR1/UTP10 family.

The protein localises to the nucleus. It is found in the nucleolus. In terms of biological role, involved in nucleolar processing of pre-18S ribosomal RNA. Involved in ribosome biosynthesis. This is an uncharacterized protein from Arabidopsis thaliana (Mouse-ear cress).